A 187-amino-acid polypeptide reads, in one-letter code: Imidazoleglycerol-phosphate dehydratase (187 aa).

It belongs to the imidazoleglycerol-phosphate dehydratase family.

Its subcellular location is the cytoplasm. The catalysed reaction is D-erythro-1-(imidazol-4-yl)glycerol 3-phosphate = 3-(imidazol-4-yl)-2-oxopropyl phosphate + H2O. It functions in the pathway amino-acid biosynthesis; L-histidine biosynthesis; L-histidine from 5-phospho-alpha-D-ribose 1-diphosphate: step 6/9. The chain is Imidazoleglycerol-phosphate dehydratase from Pyrobaculum calidifontis (strain DSM 21063 / JCM 11548 / VA1).